Here is a 405-residue protein sequence, read N- to C-terminus: Protochlorophyllide reductase A, chloroplastic (405 aa).

The transit peptide at 1–69 (MALQAASLVS…LRNNKAIIRA (69 aa)) directs the protein to the chloroplast.

Belongs to the short-chain dehydrogenases/reductases (SDR) family. POR subfamily. In terms of assembly, forms large complexes including TOC33, pPORA and OEP161 during pPORA import into plastids at the plastid envelope membrane. Interacts with CPP1 during plastid import. In terms of tissue distribution, expressed in young seedlings. Not detected in leaves.

The protein localises to the plastid. Its subcellular location is the chloroplast. The enzyme catalyses chlorophyllide a + NADP(+) = protochlorophyllide a + NADPH + H(+). It participates in porphyrin-containing compound metabolism; chlorophyll biosynthesis. Functionally, phototransformation of protochlorophyllide (Pchlide) to chlorophyllide (Chlide). PORA may also function as a photoprotectant during the transitory stage from dark to light. Functions in skotomorphogenesis, photomorphogenesis and throughout the plant life under specific light conditions. This chain is Protochlorophyllide reductase A, chloroplastic (PORA), found in Arabidopsis thaliana (Mouse-ear cress).